A 723-amino-acid polypeptide reads, in one-letter code: Catalase-peroxidase (723 aa).

The tryptophyl-tyrosyl-methioninium (Trp-Tyr) (with M-252) cross-link spans 98–226 (WHSAGSYRVG…LAAVMMGLIY (129 aa)). The active-site Proton acceptor is the H99. The segment at residues 226–252 (YVNPEGVDGNPDPLKTAKDMRVTFARM) is a cross-link (tryptophyl-tyrosyl-methioninium (Tyr-Met) (with W-98)). Position 267 (H267) interacts with heme b.

It belongs to the peroxidase family. Peroxidase/catalase subfamily. In terms of assembly, homodimer or homotetramer. Requires heme b as cofactor. Post-translationally, formation of the three residue Trp-Tyr-Met cross-link is important for the catalase, but not the peroxidase activity of the enzyme.

It catalyses the reaction H2O2 + AH2 = A + 2 H2O. The catalysed reaction is 2 H2O2 = O2 + 2 H2O. Functionally, bifunctional enzyme with both catalase and broad-spectrum peroxidase activity. The sequence is that of Catalase-peroxidase from Vibrio vulnificus (strain YJ016).